The primary structure comprises 161 residues: Ribosome maturation factor RimP (161 aa).

The protein belongs to the RimP family.

It localises to the cytoplasm. Its function is as follows. Required for maturation of 30S ribosomal subunits. The protein is Ribosome maturation factor RimP of Rickettsia massiliae (strain Mtu5).